The primary structure comprises 324 residues: Glucosyl-3-phosphoglycerate synthase (324 aa).

UDP-alpha-D-glucose contacts are provided by residues 50–54 (PALNE), S81, K114, and 134–135 (DS). Residue D136 coordinates Mn(2+). 184–187 (GRVT) serves as a coordination point for (2R)-3-phosphoglycerate. Residues 229–232 (YGVE) and 256–261 (RAHRNR) each bind UDP-alpha-D-glucose. H258 is a binding site for Mn(2+). N260 lines the (2R)-3-phosphoglycerate pocket.

This sequence belongs to the glycosyltransferase 2 family. Homotrimer. It depends on Mg(2+) as a cofactor. Mn(2+) serves as cofactor.

It carries out the reaction an NDP-alpha-D-glucose + (2R)-3-phosphoglycerate = (2R)-2-O-(alpha-D-glucopyranosyl)-3-phospho-glycerate + a ribonucleoside 5'-diphosphate + H(+). The catalysed reaction is (2R)-3-phosphoglycerate + UDP-alpha-D-glucose = (2R)-2-O-(alpha-D-glucopyranosyl)-3-phospho-glycerate + UDP + H(+). The enzyme catalyses ADP-alpha-D-glucose + (2R)-3-phosphoglycerate = (2R)-2-O-(alpha-D-glucopyranosyl)-3-phospho-glycerate + ADP + H(+). It catalyses the reaction GDP-D-glucose + (2R)-3-phosphoglycerate = (2R)-2-O-(alpha-D-glucopyranosyl)-3-phospho-glycerate + GDP + H(+). Functionally, involved in the biosynthesis of 6-O-methylglucose lipopolysaccarides (MGLPs). Catalyzes the transfer of the glucose moiety from a nuleotide sugar such as UDP-alpha-D-glucose to the position 2 of 3-phospho-D-glycerate (3-PGA) to form glucosyl-3-phosphoglycerate (GPG). It can use UDP-glucose, ADP-glucose and GDP-glucose as sugar donor substrates with decreasing affinity and with 3-PGA as an acceptor. D-glycerate can only be an acceptor with ADP-glucose and at a very low rate. This is Glucosyl-3-phosphoglycerate synthase (gpgS) from Mycobacterium bovis (strain ATCC BAA-935 / AF2122/97).